Consider the following 619-residue polypeptide: Zinc finger protein 668 (619 aa).

Residue methionine 1 is modified to N-acetylmethionine. Serine 10 carries the post-translational modification Phosphoserine. The segment at 22–44 (YKCLSCTKTFPNAPRAARHAATH) adopts a C2H2-type 1 zinc-finger fold. Residues 34 to 79 (APRAARHAATHGPADCSEEVAEVKPKPETEAKAEEASGEKVSGSAA) form a disordered region. Residues 54–71 (AEVKPKPETEAKAEEASG) show a composition bias toward basic and acidic residues. Residues lysine 57, lysine 59, lysine 65, and lysine 80 each participate in a glycyl lysine isopeptide (Lys-Gly) (interchain with G-Cter in SUMO2) cross-link. 11 C2H2-type zinc fingers span residues 84–106 (YACPLCPKAYKTAPELRSHGRSH), 112–134 (FPCPECGRRFMQPVCLRVHLASH), 140–162 (FRCAHCPKAYGALSKLKIHQRGH), 168–190 (YACADCGKSFADPSVFRKHRRTH), 196–218 (YSCERCGKAYAELKDLRNHERSH), 224–246 (FLCSECGKSFSRSSSLTCHQRIH), 252–274 (YRCPACGKGFTQLSSYQSHERTH), 280–302 (FLCPRCGRMFSDPSSFRRHQRAH), 308–330 (YHCEKCGKDFRQPADLAMHRRVH), 336–358 (FKCLQCDKTFVASWDLKRHALVH), and 364–386 (FRCEECGRAFAERASLTKHSRVH). Lysine 154 is covalently cross-linked (Glycyl lysine isopeptide (Lys-Gly) (interchain with G-Cter in SUMO2)). Residue serine 387 is modified to Phosphoserine. A C2H2-type 13 zinc finger spans residues 392 to 414 (FHCNACGKSFVVSSSLRKHERTH). The tract at residues 492–513 (REAPGPLEGAGEAGGEEADEKP) is disordered. Lysine 512 is covalently cross-linked (Glycyl lysine isopeptide (Lys-Gly) (interchain with G-Cter in SUMO2)). 3 consecutive C2H2-type zinc fingers follow at residues 516 to 538 (FVCRECKETFSTMTLLRRHERSH), 544 to 566 (FPCTQCGKSFSDRAGLRKHSRTH), and 572 to 594 (YTCPHCPKAFLSASDLRKHERTH).

Belongs to the krueppel C2H2-type zinc-finger protein family.

The protein resides in the nucleus. In terms of biological role, may be involved in transcriptional regulation. May play a role in DNA repair process. The sequence is that of Zinc finger protein 668 (ZNF668) from Homo sapiens (Human).